A 235-amino-acid chain; its full sequence is Transmembrane emp24 domain-containing protein 9 (235 aa).

The first 37 residues, 1–37 (MAVELGVLLVRPRPGTGLGRVMRTLLLVLWLATRGSA), serve as a signal peptide directing secretion. Topologically, residues 38–202 (LYFHIGETEK…RQTSESTNQR (165 aa)) are lumenal. The region spanning 47–145 (KKCFIEEIPD…MLRVHLDIQV (99 aa)) is the GOLD domain. Residues 121–160 (CLHSNSTKFSLFAGGMLRVHLDIQVGEHANDYAEIAAKDK) form a required for interaction with STX17 region. Residue asparagine 125 is glycosylated (N-linked (GlcNAc...) asparagine). Positions 154–184 (EIAAKDKLSELQLRVRQLVEQVEQIQKEQNY) form a coiled coil. Lysine 160 carries the N6-acetyllysine modification. A helical transmembrane segment spans residues 203-222 (VLWWSILQTLILVAIGVWQM). Topologically, residues 223–235 (RHLKSFFEAKKLV) are cytoplasmic. The COPII vesicle coat-binding motif lies at 228-229 (FF). Residues 228-235 (FFEAKKLV) carry the COPI vesicle coat-binding motif.

It belongs to the EMP24/GP25L family. As to quaternary structure, monomer and homodimer in endoplasmic reticulum. Predominantly monomeric and to lesser extent homodimeric in endoplasmic reticulum-Golgi intermediate compartment and cis-Golgi network. Probably oligomerizes with other members of the EMP24/GP25L family such as TMED2, TMED7 and TMED10. Interacts with TMED5. Interacts (via C-terminus) with COPG1; the interaction involves dimeric TMED9. Interacts with PTPN2 and SPAST. Interacts with STX17; the interaction is direct. Post-translationally, N-linked glycosylated containing high mannose.

It localises to the endoplasmic reticulum membrane. The protein resides in the golgi apparatus. The protein localises to the cis-Golgi network membrane. It is found in the endoplasmic reticulum-Golgi intermediate compartment membrane. Its subcellular location is the trans-Golgi network membrane. Its function is as follows. Appears to be involved in vesicular protein trafficking, mainly in the early secretory pathway. In COPI vesicle-mediated retrograde transport involved in the coatomer recruitment to membranes of the early secretory pathway. Increases coatomer-dependent activity of ARFGAP2. Thought to play a crucial role in the specific retention of p24 complexes in cis-Golgi membranes; specifically contributes to the coupled localization of TMED2 and TMED10 in the cis-Golgi network. May be involved in organization of intracellular membranes, such as of the ER-Golgi intermediate compartment and the Golgi apparatus. Involved in ER localization of PTPN2 isoform PTPB. This chain is Transmembrane emp24 domain-containing protein 9 (TMED9), found in Homo sapiens (Human).